The sequence spans 332 residues: tRNA (cytosine(38)-C(5))-methyltransferase (332 aa).

An SAM-dependent MTase C5-type domain is found at 3–332; sequence HKILELYSGI…ISELLKILFE (330 aa). Residues 12–14, 33–34, 55–56, and Ser75 contribute to the S-adenosyl-L-homocysteine site; these read IGG, DI, and NI. Cys78 is a catalytic residue. S-adenosyl-L-homocysteine is bound by residues Gln79, Ser97, and 316 to 317; that span reads NS.

The protein belongs to the class I-like SAM-binding methyltransferase superfamily. C5-methyltransferase family.

It localises to the cytoplasm. The protein localises to the nucleus. It carries out the reaction cytidine(38) in tRNA + S-adenosyl-L-methionine = 5-methylcytidine(38) in tRNA + S-adenosyl-L-homocysteine + H(+). The enzyme catalyses a 2'-deoxycytidine in DNA + S-adenosyl-L-methionine = a 5-methyl-2'-deoxycytidine in DNA + S-adenosyl-L-homocysteine + H(+). In terms of biological role, specifically methylates cytosine 38 in the anticodon loop of tRNA(Asp). Also has DNA (cytosine-5)-methyltransferase activity. Shows affinity for both tRNA(Asp) and DNA substrates. In Spodoptera frugiperda (Fall armyworm), this protein is tRNA (cytosine(38)-C(5))-methyltransferase.